The primary structure comprises 507 residues: Phosphoenolpyruvate carboxylase (507 aa).

Positions 1–25 are disordered; that stretch reads MHKIDRKIPNIMGTQHPDNAGVPFF.

Belongs to the PEPCase type 2 family. As to quaternary structure, homotetramer. Mg(2+) serves as cofactor.

It catalyses the reaction oxaloacetate + phosphate = phosphoenolpyruvate + hydrogencarbonate. Its function is as follows. Catalyzes the irreversible beta-carboxylation of phosphoenolpyruvate (PEP) to form oxaloacetate (OAA), a four-carbon dicarboxylic acid source for the tricarboxylic acid cycle. The sequence is that of Phosphoenolpyruvate carboxylase from Oenococcus oeni (strain ATCC BAA-331 / PSU-1).